A 177-amino-acid chain; its full sequence is Large ribosomal subunit protein uL6 (177 aa).

Belongs to the universal ribosomal protein uL6 family. Part of the 50S ribosomal subunit.

In terms of biological role, this protein binds to the 23S rRNA, and is important in its secondary structure. It is located near the subunit interface in the base of the L7/L12 stalk, and near the tRNA binding site of the peptidyltransferase center. The sequence is that of Large ribosomal subunit protein uL6 from Micrococcus luteus (strain ATCC 4698 / DSM 20030 / JCM 1464 / CCM 169 / CCUG 5858 / IAM 1056 / NBRC 3333 / NCIMB 9278 / NCTC 2665 / VKM Ac-2230) (Micrococcus lysodeikticus).